The sequence spans 342 residues: GTPase Obg (342 aa).

An Obg domain is found at 1 to 159; the sequence is MKFLDEAKVY…HWLWLRLKLI (159 aa). The 168-residue stretch at 160–327 folds into the OBG-type G domain; it reads ADAGLVGLPN…ALRALMAAMD (168 aa). GTP-binding positions include 166–173, 191–195, 212–215, 279–282, and 308–310; these read GLPNAGKS, FTTLH, DIPG, SKAD, and SAA. Mg(2+) contacts are provided by serine 173 and threonine 193.

Belongs to the TRAFAC class OBG-HflX-like GTPase superfamily. OBG GTPase family. In terms of assembly, monomer. Mg(2+) serves as cofactor.

It is found in the cytoplasm. In terms of biological role, an essential GTPase which binds GTP, GDP and possibly (p)ppGpp with moderate affinity, with high nucleotide exchange rates and a fairly low GTP hydrolysis rate. Plays a role in control of the cell cycle, stress response, ribosome biogenesis and in those bacteria that undergo differentiation, in morphogenesis control. This Methylobacterium nodulans (strain LMG 21967 / CNCM I-2342 / ORS 2060) protein is GTPase Obg.